A 238-amino-acid chain; its full sequence is MKKTVIASSLAVALGVTGYALTTDNSAHASESTTNYAQLANLAQNNPSELNAHPVQAGAYNITFVKDGFKYNFTSDGQSWSWNYTYVGGADTVATTQAAPAAQSTDYSASYSNEASTQSVSSNQQSSNTNVEAVSAPKTTSYSASTSSSSSASTGGSVKEQFLANGGTEAAWNAIVMPESGGNPNAVNPAGYRGLGQTKESWGTGSVASQTKGMINYANSRYGSLDAAIAFRDNHGWW.

The first 29 residues, 1–29, serve as a signal peptide directing secretion; sequence MKKTVIASSLAVALGVTGYALTTDNSAHA. A disordered region spans residues 115–157; it reads ASTQSVSSNQQSSNTNVEAVSAPKTTSYSASTSSSSSASTGGS. Low complexity-rich tracts occupy residues 116-131 and 139-157; these read STQS…NTNV and TTSY…TGGS.

This sequence belongs to the transglycosylase family. IsaA subfamily.

It is found in the secreted. Its function is as follows. Is able to cleave peptidoglycan. The sequence is that of Probable transglycosylase IsaA (isaA) from Staphylococcus haemolyticus (strain JCSC1435).